The following is a 119-amino-acid chain: Myohemerythrin-1 (119 aa).

Fe cation contacts are provided by H25, H55, N58, E59, H74, H78, H107, and D112.

It belongs to the hemerythrin family. In terms of assembly, monomer. Muscle.

Its function is as follows. Myohemerythrin is an oxygen-binding protein found in the retractor muscles of certain worms. The oxygen-binding site contains two iron atoms. This chain is Myohemerythrin-1, found in Phascolopsis gouldii (Peanut worm).